The chain runs to 318 residues: Replication factor C small subunit (318 aa).

43 to 50 provides a ligand contact to ATP; it reads GSVGTGKT.

Belongs to the activator 1 small subunits family. RfcS subfamily. Heteromultimer composed of small subunits (RfcS) and large subunits (RfcL).

Functionally, part of the RFC clamp loader complex which loads the PCNA sliding clamp onto DNA. This Thermoplasma acidophilum (strain ATCC 25905 / DSM 1728 / JCM 9062 / NBRC 15155 / AMRC-C165) protein is Replication factor C small subunit.